We begin with the raw amino-acid sequence, 24 residues long: Gaegurin-6 (24 aa).

Cysteine 18 and cysteine 24 are oxidised to a cystine.

The protein belongs to the frog skin active peptide (FSAP) family. Brevinin subfamily. As to quaternary structure, monomer. As to expression, expressed by the skin glands.

The protein localises to the secreted. Functionally, has a non-hemolytic activity. Has a broad spectrum of activity against both Gram-positive and Gram-negative bacteria, fungi and protozoa. The chain is Gaegurin-6 (GGN6) from Glandirana rugosa (Japanese wrinkled frog).